The following is a 142-amino-acid chain: Putative pre-16S rRNA nuclease (142 aa).

Belongs to the YqgF nuclease family.

The protein localises to the cytoplasm. In terms of biological role, could be a nuclease involved in processing of the 5'-end of pre-16S rRNA. This Staphylococcus epidermidis (strain ATCC 35984 / DSM 28319 / BCRC 17069 / CCUG 31568 / BM 3577 / RP62A) protein is Putative pre-16S rRNA nuclease.